Here is a 367-residue protein sequence, read N- to C-terminus: Ferrochelatase (367 aa).

Residues His-226 and Glu-307 each contribute to the Fe cation site.

Belongs to the ferrochelatase family.

The protein resides in the cytoplasm. The enzyme catalyses heme b + 2 H(+) = protoporphyrin IX + Fe(2+). Its pathway is porphyrin-containing compound metabolism; protoheme biosynthesis; protoheme from protoporphyrin-IX: step 1/1. In terms of biological role, catalyzes the ferrous insertion into protoporphyrin IX. The protein is Ferrochelatase of Burkholderia mallei (strain NCTC 10247).